The following is a 562-amino-acid chain: MSFILPSESIDGTHPCNGLHMNGQDSLVQPLLTDFYQITMCYAYWKTGTHNEPAVFDVFFRKNPFQGEFTVFAGLEDCLRFVENFKFSQSDIDYVKKILPENAEPEFYEYLETLNGSHLTIEAVAEGSVVFPKVPLLTINGPLAMCQLIETSILNLVNYASLVATNAARFRQASGWKIQLLEFGLRRAQGPNGGLTASKYCYIGGFDATSNVLAGKLYGIPVKGTQAHSFICSFSSPAELKVRLLNHKITNEKADLFQISMEKRAWLLDQFSWKAALSEVSDGELSAFVAYAIAFPDTFLALIDTYDVIRSGVVNFVAVSLALHDLGYRSMGCRIDSGDLSYLSKELRECFVKVSTLKGEYKFFEKMSIVASNDINEETIMSLNDQQHEINAFGVGTHLVTCQKQPALGCVYKLVAQSAQPKIKLSQDVTKITIPGKKKCYRIFGKNGYAILDLMMLEDEPEPQPNQQILCRHPFEESKRALVNANKIIKLHNVYWKDGEMITPLPTLNEIKEHVNESIRSTLRQDHRRYLNPTPYKVSVSERLYQFLHTLWLQNAPIGQLE.

Residues Y36, F183, and T225 each coordinate nicotinate. The residue at position 228 (H228) is a Phosphohistidine. 5-phospho-alpha-D-ribose 1-diphosphate is bound at residue T397.

The protein belongs to the NAPRTase family. It depends on Mg(2+) as a cofactor. The cofactor is Mn(2+). In terms of processing, transiently phosphorylated on a His residue during the reaction cycle. Phosphorylation strongly increases the affinity for substrates and increases the rate of nicotinate D-ribonucleotide production. Dephosphorylation regenerates the low-affinity form of the enzyme, leading to product release.

It carries out the reaction nicotinate + 5-phospho-alpha-D-ribose 1-diphosphate + ATP + H2O = nicotinate beta-D-ribonucleotide + ADP + phosphate + diphosphate. The protein operates within cofactor biosynthesis; NAD(+) biosynthesis; nicotinate D-ribonucleotide from nicotinate: step 1/1. Functionally, catalyzes the first step in the biosynthesis of NAD from nicotinic acid, the ATP-dependent synthesis of beta-nicotinate D-ribonucleotide from nicotinate and 5-phospho-D-ribose 1-phosphate. Helps prevent cellular oxidative stress via its role in NAD biosynthesis. In Caenorhabditis elegans, this protein is Nicotinate phosphoribosyltransferase.